We begin with the raw amino-acid sequence, 3210 residues long: PF 1022-synthetase (3210 aa).

Residues 68–454 (VDDRRHAIGH…VKELDVVTAE (387 aa)) form a condensation 1 region. The segment at 483–876 (AGDPNKAAVF…GRKDSQVKIR (394 aa)) is adenylation 1. Residues 1010 to 1086 (APATGIEVKL…GLVDVIGRDP (77 aa)) form the Carrier 1 domain. An O-(pantetheine 4'-phosphoryl)serine modification is found at Ser-1047. Positions 1104–1534 (SFAQGRLWFL…RTPIAVLPLT (431 aa)) are condensation 2. Residues 1563–2023 (FRKQVAAHPH…GRMDQQVKIR (461 aa)) are adenylation 2. The segment at 2081–2236 (EGWKDFFESN…YLLEVVESLV (156 aa)) is S-adenosyl-L-methionine-dependent N-methyltransferase. 2 Carrier domains span residues 2570–2644 (DPFV…RQGL) and 2668–2742 (TPSD…RLTQ). Residues Ser-2604 and Ser-2702 each carry the O-(pantetheine 4'-phosphoryl)serine modification. The interval 2788 to 3203 (LDVYPATQMQ…KRMLEELCGN (416 aa)) is condensation 3. Positions 2976–3002 (VIKGNNNTTPPPPPQQQSTPSGAHHAS) are disordered.

This sequence belongs to the NRP synthetase family. The cofactor is pantetheine 4'-phosphate.

It carries out the reaction 2 (R)-3-phenyllactate + 2 (R)-lactate + 4 L-leucine + 4 S-adenosyl-L-methionine + 8 ATP = PF1022A + 8 AMP + 4 S-adenosyl-L-homocysteine + 8 diphosphate + 8 H(+). The catalysed reaction is 4 (R)-3-phenyllactate + 4 L-leucine + 4 S-adenosyl-L-methionine + 8 ATP = PF1022B + 8 AMP + 4 S-adenosyl-L-homocysteine + 8 diphosphate + 8 H(+). The enzyme catalyses 3 (R)-3-phenyllactate + (R)-lactate + 4 L-leucine + 4 S-adenosyl-L-methionine + 8 ATP = PF1022C + 8 AMP + 4 S-adenosyl-L-homocysteine + 8 diphosphate + 8 H(+). It catalyses the reaction (R)-3-phenyllactate + 3 (R)-lactate + 4 L-leucine + 4 S-adenosyl-L-methionine + 8 ATP = PF1022D + 8 AMP + 4 S-adenosyl-L-homocysteine + 8 diphosphate + 8 H(+). It carries out the reaction 4 (R)-lactate + 4 L-leucine + 4 S-adenosyl-L-methionine + 8 ATP = PF1022F + 8 AMP + 4 S-adenosyl-L-homocysteine + 8 diphosphate + 8 H(+). Its function is as follows. Nonribosomal peptide synthetase that synthesizes cyclooctadepsipeptides (CODPs) PF 1022 that show powerful broad-spectrum anthelmintic activity with low toxicity in animals. Couples 4 N-methyl-L-leucines and a varying content of alpha-D-hydroxy acids (D-lactates or D-phenyllactates) in an alternative fashion. The enzyme is capable of synthesizing all known natural cyclooctadepsipeptides of the PF1022 type differing in the content of D-lactate and D-phenyllactate, using from 4 D-lactates (PF 1022F) to 4 D-phenyllactates (PF 1022B), respectively. The formation of different PF-related compounds is mainly controlled by the molar ratio of the hydroxy acids. N-methylation of the substrate L-leucine takes place after covalent binding prior to peptide bond formation. This chain is PF 1022-synthetase, found in Rosellinia sp. (Mycelia sterilia).